Consider the following 103-residue polypeptide: Large ribosomal subunit protein bL21 (103 aa).

Belongs to the bacterial ribosomal protein bL21 family. As to quaternary structure, part of the 50S ribosomal subunit. Contacts protein L20.

In terms of biological role, this protein binds to 23S rRNA in the presence of protein L20. In Shewanella sediminis (strain HAW-EB3), this protein is Large ribosomal subunit protein bL21.